The following is a 742-amino-acid chain: Mechanosensitive ion channel protein 9 (742 aa).

The segment at 1–117 (MAERRVSNGE…REENGGRSLR (117 aa)) is disordered. Residues 17 to 26 (SDKEDSKDPR) show a composition bias toward basic and acidic residues. S28 and S36 each carry phosphoserine. Positions 105–117 (DSTREENGGRSLR) are enriched in basic and acidic residues. Residues S142 and S145 each carry the phosphoserine modification. A run of 6 helical transmembrane segments spans residues 180–200 (AFLE…SLTI), 221–241 (MVTL…VFII), 261–281 (NVQV…LFDG), 292–312 (FLDF…LFLV), 524–544 (LITG…LDIA), and 559–579 (LAFM…FVFV).

It belongs to the MscS (TC 1.A.23) family. Detected in the epidermis, cortex, and endodermis of the root tip.

The protein resides in the cell membrane. Mechanosensitive channel that opens in response to stretch forces in the membrane lipid bilayer. The polypeptide is Mechanosensitive ion channel protein 9 (MSL9) (Arabidopsis thaliana (Mouse-ear cress)).